The following is a 158-amino-acid chain: Putative peptidoglycan-binding-like protein (158 aa).

Positions 1 to 24 (MRSPKVKFLTIFTFCIFITKMSFA) are cleaved as a signal peptide.

Belongs to the IagB/IpgF/P19 family.

It localises to the periplasm. The chain is Putative peptidoglycan-binding-like protein (pbl) from Escherichia coli (strain K12).